The following is a 465-amino-acid chain: GTPase Der (465 aa).

2 EngA-type G domains span residues 3–166 and 184–358; these read FLVA…LNEY and IHFS…ACAN. Residues 9-16, 56-60, 118-121, 190-197, 237-241, and 302-305 each bind GTP; these read GRANVGKS, DTGGI, NKVD, GRPNVGKS, DTAGV, and NKWD. One can recognise a KH-like domain in the interval 359-443; it reads KKITTADATR…PIVFEFKQSE (85 aa). The tract at residues 446-465 is disordered; sequence FADRKNKRSKDEGSKSKKVK.

This sequence belongs to the TRAFAC class TrmE-Era-EngA-EngB-Septin-like GTPase superfamily. EngA (Der) GTPase family. Associates with the 50S ribosomal subunit.

GTPase that plays an essential role in the late steps of ribosome biogenesis. The sequence is that of GTPase Der from Francisella tularensis subsp. novicida (strain U112).